A 262-amino-acid chain; its full sequence is 2-keto-4-pentenoate hydratase (262 aa).

The protein belongs to the hydratase/decarboxylase family. MhpD subfamily. A divalent metal cation serves as cofactor.

It catalyses the reaction (S)-4-hydroxy-2-oxopentanoate = (2Z)-2-hydroxypenta-2,4-dienoate + H2O. It participates in aromatic compound metabolism; 3-phenylpropanoate degradation. In terms of biological role, catalyzes the conversion of 2-hydroxypentadienoic acid (enolic form of 2-oxopent-4-enoate) to 4-hydroxy-2-ketopentanoic acid. This chain is 2-keto-4-pentenoate hydratase, found in Burkholderia vietnamiensis (strain G4 / LMG 22486) (Burkholderia cepacia (strain R1808)).